The primary structure comprises 727 residues: Catalase-peroxidase (727 aa).

Residues 1–21 (MDAKVEDNIAGKCPMGHGRGP) are disordered. A cross-link (tryptophyl-tyrosyl-methioninium (Trp-Tyr) (with M-243)) is located at residues 95–217 (WHAAGTYRIT…LGAVQMGLIY (123 aa)). Residue His96 is the Proton acceptor of the active site. A cross-link (tryptophyl-tyrosyl-methioninium (Tyr-Met) (with W-95)) is located at residues 217-243 (YVNPEGPNGNPDPLASARDIRETFARM). A heme b-binding site is contributed by His258.

The protein belongs to the peroxidase family. Peroxidase/catalase subfamily. Homodimer or homotetramer. Requires heme b as cofactor. Post-translationally, formation of the three residue Trp-Tyr-Met cross-link is important for the catalase, but not the peroxidase activity of the enzyme.

The enzyme catalyses H2O2 + AH2 = A + 2 H2O. It carries out the reaction 2 H2O2 = O2 + 2 H2O. Bifunctional enzyme with both catalase and broad-spectrum peroxidase activity. Important for stationary phase survival. This is Catalase-peroxidase from Caulobacter vibrioides (strain ATCC 19089 / CIP 103742 / CB 15) (Caulobacter crescentus).